We begin with the raw amino-acid sequence, 341 residues long: Protein-glutamate methylesterase/protein-glutamine glutaminase 1 (341 aa).

Residues 2–119 (KVGIVNDSAL…SDAKLTAGPL (118 aa)) enclose the Response regulatory domain. Aspartate 53 carries the post-translational modification 4-aspartylphosphate. One can recognise a CheB-type methylesterase domain in the interval 146 to 331 (TLAASRLVAI…LTAIAPRLVQ (186 aa)). Residues serine 158, histidine 185, and aspartate 278 contribute to the active site.

This sequence belongs to the CheB family. In terms of processing, phosphorylated by CheA. Phosphorylation of the N-terminal regulatory domain activates the methylesterase activity.

It is found in the cytoplasm. It carries out the reaction [protein]-L-glutamate 5-O-methyl ester + H2O = L-glutamyl-[protein] + methanol + H(+). The enzyme catalyses L-glutaminyl-[protein] + H2O = L-glutamyl-[protein] + NH4(+). In terms of biological role, involved in chemotaxis. Part of a chemotaxis signal transduction system that modulates chemotaxis in response to various stimuli. Catalyzes the demethylation of specific methylglutamate residues introduced into the chemoreceptors (methyl-accepting chemotaxis proteins or MCP) by CheR. Also mediates the irreversible deamidation of specific glutamine residues to glutamic acid. This Cupriavidus pinatubonensis (strain JMP 134 / LMG 1197) (Cupriavidus necator (strain JMP 134)) protein is Protein-glutamate methylesterase/protein-glutamine glutaminase 1.